The chain runs to 293 residues: Heterogeneous nuclear ribonucleoprotein C-like 4 (293 aa).

The region spanning 16–87 (SRVFIGNLNT…QVVDINLAAE (72 aa)) is the RRM domain. Disordered regions lie at residues 140 to 177 (VVPSKRQRISGNTSRRGKSGFNSKSGKRGSSKSGKLKG) and 208 to 293 (HCKQ…QDDS). A coiled-coil region spans residues 177-208 (GDDLQAIKQELTQIKQKVDSLLENLEKIEKEH). Composition is skewed to basic and acidic residues over residues 208 to 222 (HCKQGVEVKNAKSEE) and 229 to 240 (SKKDKTHVKMES). The segment covering 242–263 (GGADDSVEEGDLLCDDDNEDQG) has biased composition (acidic residues). The segment covering 269–293 (LIKDDEKGAEEGEDDRDRANGQDDS) has biased composition (basic and acidic residues).

It belongs to the RRM HNRPC family. RALY subfamily.

It localises to the nucleus. The polypeptide is Heterogeneous nuclear ribonucleoprotein C-like 4 (Homo sapiens (Human)).